We begin with the raw amino-acid sequence, 71 residues long: Small ribosomal subunit protein bS21 (71 aa).

It belongs to the bacterial ribosomal protein bS21 family.

This is Small ribosomal subunit protein bS21 from Photobacterium profundum (strain SS9).